Here is a 284-residue protein sequence, read N- to C-terminus: RNase adapter protein RapZ (284 aa).

8 to 15 (GRSGSGKS) serves as a coordination point for ATP. 56–59 (DVRN) contributes to the GTP binding site. The interval 266–284 (RSRGKNVQSRHRTLEKRKS) is RNA-binding.

Belongs to the RapZ-like family. RapZ subfamily. Homotrimer.

Modulates the synthesis of GlmS, by affecting the processing and stability of the regulatory small RNA GlmZ. When glucosamine-6-phosphate (GlcN6P) concentrations are high in the cell, RapZ binds GlmZ and targets it to cleavage by RNase E. Consequently, GlmZ is inactivated and unable to activate GlmS synthesis. Under low GlcN6P concentrations, RapZ is sequestered and inactivated by an other regulatory small RNA, GlmY, preventing GlmZ degradation and leading to synthesis of GlmS. This Klebsiella oxytoca protein is RNase adapter protein RapZ.